The sequence spans 871 residues: Protein TIC 100 (871 aa).

The segment at 1 to 85 is disordered; sequence MANEELTESQ…NANPETNIRR (85 aa). Positions 8 to 20 are enriched in polar residues; it reads ESQQQEDPSQQLP. Positions 30–46 are enriched in low complexity; sequence SDSNSDSDASSQSSGDD. 3 MORN repeats span residues 219–239, 243–257, and 337–352; these read YEGTVWDDLAQGKGVYIAENG, YEGEWLQNDMEGHGV, and YAGQWKHSRMHGCGVY. Asn-238 is subject to Deamidated asparagine. Positions 587–647 form a coiled coil; it reads MLDGLEKWTE…QEEEKKTEMG (61 aa). Disordered stretches follow at residues 631 to 654 and 669 to 721; these read EELKKKEQEEEKKTEMGLTEEDED and KEKI…NSPF. The segment covering 632-645 has biased composition (basic and acidic residues); the sequence is ELKKKEQEEEKKTE. Thr-649 bears the Phosphothreonine mark. Residues 669–683 are compositionally biased toward basic and acidic residues; it reads KEKIQENKQEEKYKD. Over residues 684–704 the composition is skewed to acidic residues; it reads DDDEDDDDGDDDDDDDDDDDL.

As to quaternary structure, part of the Tic complex. Component of the 1-MD complex, composed of TIC20-I, TIC214, TIC100 and TIC56. Interacts with the translocating preproteins. Hydrolysis of ATP is essential for the formation of this complex. The 1-MD complex interacts with TIC21. Preferentially expressed in ovules, and moderately expressed in leaves and siliques.

It localises to the plastid. The protein resides in the chloroplast inner membrane. In terms of biological role, involved in protein precursor import into chloroplasts. May be part of an intermediate translocation complex acting as a protein-conducting channel at the inner envelope. Plays an important role during embryogenesis and chloroplast biogenesis. The polypeptide is Protein TIC 100 (Arabidopsis thaliana (Mouse-ear cress)).